The following is a 3063-amino-acid chain: Collagen alpha-1(XII) chain (3063 aa).

Positions 1-23 (MRSRLPPALAALGAALLLSSIEA) are cleaved as a signal peptide. Residues 27-117 (PPSDLNFKII…GQLTIQTGSS (91 aa)) enclose the Fibronectin type-III 1 domain. The 177-residue stretch at 140–316 (DLVFLVDGSW…DIQNEIISQV (177 aa)) folds into the VWFA 1 domain. Serine 329 carries an O-linked (Xyl...) (chondroitin sulfate) serine glycan. The 91-residue stretch at 336–426 (PPSNLIAMEV…SIMEKTQPMK (91 aa)) folds into the Fibronectin type-III 2 domain. The VWFA 2 domain occupies 440 to 616 (DIVFLVDGSY…RISFELTQSI (177 aa)). 6 Fibronectin type-III domains span residues 634–722 (PPKD…TEEV), 725–816 (APRN…VRGN), 817–905 (PRDL…LEER), 907–998 (SPQD…LSQD), 999–1087 (SKTL…ASRF), and 1089–1179 (SPRN…TLSD). Asparagine 700 carries N-linked (GlcNAc...) asparagine glycosylation. O-linked (Xyl...) (chondroitin sulfate) serine glycosylation occurs at serine 798. Positions 799–830 (GPGTPLTGNAATEEVRGNPRDLRVSDPTTSTM) are disordered. A compositionally biased stretch (basic and acidic residues) spans 811 to 822 (EEVRGNPRDLRV). The short motif at 862-864 (RGD) is the Cell attachment site element. O-linked (Xyl...) (chondroitin sulfate) serine glycans are attached at residues serine 889 and serine 981. A disordered region spans residues 1077 to 1099 (RQGSGTTASRFKSPRNLKTSDPT). Over residues 1079–1099 (GSGTTASRFKSPRNLKTSDPT) the composition is skewed to polar residues. Residues 1199–1371 (DIVLLVDGSW…ESLSRIVDDL (173 aa)) enclose the VWFA 3 domain. Fibronectin type-III domains follow at residues 1387–1476 (APSN…LPVP), 1477–1567 (VVSL…LPLP), 1568–1658 (RPQD…VPAP), 1659–1754 (TNLK…APKS), 1755–1849 (GPRN…TVRN), 1850–1935 (LRVY…LMRG), 1936–2026 (LARN…LPRS), 2027–2117 (GPRN…VGLL), 2118–2206 (PPQN…LYLN), and 2207–2294 (VTDL…TVKP). Asparagine 1763 carries an N-linked (GlcNAc...) asparagine glycan. N-linked (GlcNAc...) asparagine glycosylation is present at asparagine 2206. A disordered region spans residues 2283 to 2312 (GVSVKEHTTVKPTEAPTEPPTPPPPPTIPP). Residues 2299 to 2311 (TEPPTPPPPPTIP) are compositionally biased toward pro residues. The VWFA 4 domain maps to 2323-2496 (DIVFLTDASW…ESFEKIEDNL (174 aa)). Residues 2451-2746 (SGFSVFVVGV…NSCTCTQDSV (296 aa)) are nonhelical region (NC3). The region spanning 2520-2712 (GFKMLEAYNL…IQSFDIVCSP (193 aa)) is the Laminin G-like domain. N-linked (GlcNAc...) asparagine glycans are attached at residues asparagine 2528 and asparagine 2679. 2 disordered regions span residues 2743 to 2896 (QDSV…GDRG) and 2932 to 3063 (NDYQ…PGSG). Collagen-like domains lie at 2747–2798 (GPPG…GPNG), 2802–2852 (PGEQ…AMGP), 2853–2898 (RGPP…RGDI), and 2941–2990 (PGPP…GERG). The segment at 2747 to 2898 (GPPGPPGPAG…KGEKGDRGDI (152 aa)) is triple-helical region (COL2) with 1 imperfection. Residues 2779–2781 (RGD) carry the Cell attachment site motif. The span at 2784 to 2794 (PPGPQGPPGPQ) shows a compositional bias: pro residues. The segment covering 2817–2826 (PGLPGRTGTP) has biased composition (low complexity). 2 stretches are compositionally biased toward pro residues: residues 2828-2837 (LPGPPGPMGP) and 2853-2862 (RGPPGPPGSP). The segment covering 2864-2874 (SPGVTGPSGKP) has biased composition (low complexity). The Cell attachment site motif lies at 2895–2897 (RGD). The tract at residues 2899–2941 (ASQNMMRAVARQVCEQLISGQMNRFNQMLNQIPNDYQSSRNQP) is nonhelical region (NC2). Positions 2941 to 2950 (PGPPGPPGPP) are enriched in pro residues. The segment at 2942-3044 (GPPGPPGPPG…RGPPGPPGYC (103 aa)) is triple-helical region (COL1) with 2 imperfections. 4-hydroxyproline occurs at positions 2944, 2947, 2950, 2959, 2965, 2968, 2971, 2983, 3000, 3003, 3014, 3023, 3026, and 3029. Gly residues predominate over residues 2957–2966 (GEPGPGGRPG). Residues 3006 to 3020 (QGESRTGPPGSTGSR) show a composition bias toward low complexity. Residues 3045–3063 (DSSQCASIPYNGQGYPGSG) are nonhelical region (NC1).

It belongs to the fibril-associated collagens with interrupted helices (FACIT) family. Trimer of identical chains each containing 190 kDa of non-triple-helical sequences. In terms of processing, the triple-helical tail is stabilized by disulfide bonds at each end. Post-translationally, hydroxylation on proline residues within the sequence motif, GXPG, is most likely to be 4-hydroxy as this fits the requirement for 4-hydroxylation in vertebrates. Isoform 1 O-glycosylation; glycosaminoglycan of chondroitin-sulfate type. In terms of tissue distribution, found in collagen I-containing tissues: both isoform 1 and isoform 2 appear in amnion, chorion, skeletal muscle, small intestine, and in cell culture of dermal fibroblasts, keratinocytes and endothelial cells. Only isoform 2 is found in lung, placenta, kidney and a squamous cell carcinoma cell line. Isoform 1 is also present in the corneal epithelial Bowman's membrane (BM) and the interfibrillar matrix of the corneal stroma, but it is not detected in the limbal BM.

The protein resides in the secreted. It is found in the extracellular space. It localises to the extracellular matrix. In terms of biological role, type XII collagen interacts with type I collagen-containing fibrils, the COL1 domain could be associated with the surface of the fibrils, and the COL2 and NC3 domains may be localized in the perifibrillar matrix. This chain is Collagen alpha-1(XII) chain (COL12A1), found in Homo sapiens (Human).